A 282-amino-acid polypeptide reads, in one-letter code: Formamidopyrimidine-DNA glycosylase (282 aa).

P2 serves as the catalytic Schiff-base intermediate with DNA. The active-site Proton donor is the E3. The Proton donor; for beta-elimination activity role is filled by K61. DNA contacts are provided by H93, R112, and K158. An FPG-type zinc finger spans residues 244–278 (DAYGREGEPCRRCGAIMRRDKFMNRSSFYCPRCQP). The Proton donor; for delta-elimination activity role is filled by R268.

This sequence belongs to the FPG family. In terms of assembly, monomer. The cofactor is Zn(2+).

It carries out the reaction Hydrolysis of DNA containing ring-opened 7-methylguanine residues, releasing 2,6-diamino-4-hydroxy-5-(N-methyl)formamidopyrimidine.. The enzyme catalyses 2'-deoxyribonucleotide-(2'-deoxyribose 5'-phosphate)-2'-deoxyribonucleotide-DNA = a 3'-end 2'-deoxyribonucleotide-(2,3-dehydro-2,3-deoxyribose 5'-phosphate)-DNA + a 5'-end 5'-phospho-2'-deoxyribonucleoside-DNA + H(+). In terms of biological role, involved in base excision repair of DNA damaged by oxidation or by mutagenic agents. Acts as a DNA glycosylase that recognizes and removes damaged bases. Has a preference for oxidized purines, such as 7,8-dihydro-8-oxoguanine (8-oxoG). Has AP (apurinic/apyrimidinic) lyase activity and introduces nicks in the DNA strand. Cleaves the DNA backbone by beta-delta elimination to generate a single-strand break at the site of the removed base with both 3'- and 5'-phosphates. In Mycolicibacterium gilvum (strain PYR-GCK) (Mycobacterium gilvum (strain PYR-GCK)), this protein is Formamidopyrimidine-DNA glycosylase.